The sequence spans 308 residues: Methionyl-tRNA formyltransferase (308 aa).

A (6S)-5,6,7,8-tetrahydrofolate-binding site is contributed by 110–113; sequence SLLP.

This sequence belongs to the Fmt family.

The catalysed reaction is L-methionyl-tRNA(fMet) + (6R)-10-formyltetrahydrofolate = N-formyl-L-methionyl-tRNA(fMet) + (6S)-5,6,7,8-tetrahydrofolate + H(+). Attaches a formyl group to the free amino group of methionyl-tRNA(fMet). The formyl group appears to play a dual role in the initiator identity of N-formylmethionyl-tRNA by promoting its recognition by IF2 and preventing the misappropriation of this tRNA by the elongation apparatus. The protein is Methionyl-tRNA formyltransferase of Mycobacterium sp. (strain KMS).